The chain runs to 67 residues: DNA-directed RNA polymerase subunit omega (67 aa).

It belongs to the RNA polymerase subunit omega family. In terms of assembly, the RNAP catalytic core consists of 2 alpha, 1 beta, 1 beta' and 1 omega subunit. When a sigma factor is associated with the core the holoenzyme is formed, which can initiate transcription.

The catalysed reaction is RNA(n) + a ribonucleoside 5'-triphosphate = RNA(n+1) + diphosphate. Promotes RNA polymerase assembly. Latches the N- and C-terminal regions of the beta' subunit thereby facilitating its interaction with the beta and alpha subunits. The protein is DNA-directed RNA polymerase subunit omega of Ralstonia nicotianae (strain ATCC BAA-1114 / GMI1000) (Ralstonia solanacearum).